The chain runs to 282 residues: NADPH-dependent 7-cyano-7-deazaguanine reductase (282 aa).

88 to 90 (IES) lines the substrate pocket. 90-91 (SK) provides a ligand contact to NADPH. The active-site Thioimide intermediate is Cys-190. Asp-197 acts as the Proton donor in catalysis. 229 to 230 (HE) contacts substrate. 258 to 259 (RG) is a binding site for NADPH.

It belongs to the GTP cyclohydrolase I family. QueF type 2 subfamily. Homodimer.

The protein resides in the cytoplasm. It catalyses the reaction 7-aminomethyl-7-carbaguanine + 2 NADP(+) = 7-cyano-7-deazaguanine + 2 NADPH + 3 H(+). It participates in tRNA modification; tRNA-queuosine biosynthesis. Functionally, catalyzes the NADPH-dependent reduction of 7-cyano-7-deazaguanine (preQ0) to 7-aminomethyl-7-deazaguanine (preQ1). The protein is NADPH-dependent 7-cyano-7-deazaguanine reductase of Shigella dysenteriae serotype 1 (strain Sd197).